The following is a 1293-amino-acid chain: Phosphoribosylformylglycinamidine synthase (1293 aa).

Residues 305–316, 384–386, and Ala-676 each bind ATP; these read GAATGSGGEIRD and TGY. Residues 307 to 326 are disordered; it reads ATGSGGEIRDEGATGRGSKP. Mg(2+) is bound by residues Asp-677, Glu-716, Asn-720, and Asp-884. Ser-886 is a binding site for ATP. Residues 1040-1293 enclose the Glutamine amidotransferase type-1 domain; it reads MAILREQGVN…MFRNARVKIG (254 aa). Catalysis depends on Cys-1133, which acts as the Nucleophile. Catalysis depends on residues His-1258 and Glu-1260.

It in the N-terminal section; belongs to the FGAMS family. In terms of assembly, monomer.

The protein resides in the cytoplasm. It catalyses the reaction N(2)-formyl-N(1)-(5-phospho-beta-D-ribosyl)glycinamide + L-glutamine + ATP + H2O = 2-formamido-N(1)-(5-O-phospho-beta-D-ribosyl)acetamidine + L-glutamate + ADP + phosphate + H(+). It participates in purine metabolism; IMP biosynthesis via de novo pathway; 5-amino-1-(5-phospho-D-ribosyl)imidazole from N(2)-formyl-N(1)-(5-phospho-D-ribosyl)glycinamide: step 1/2. Phosphoribosylformylglycinamidine synthase involved in the purines biosynthetic pathway. Catalyzes the ATP-dependent conversion of formylglycinamide ribonucleotide (FGAR) and glutamine to yield formylglycinamidine ribonucleotide (FGAM) and glutamate. The chain is Phosphoribosylformylglycinamidine synthase from Shewanella frigidimarina (strain NCIMB 400).